We begin with the raw amino-acid sequence, 266 residues long: Beta-lactamase OXA-20 (266 aa).

Residues 1-21 (MIIRFLALLFSAVVLVSLGHA) form the signal peptide. S72 serves as the catalytic Acyl-ester intermediate. An N6-carboxylysine modification is found at K75. Position 210–212 (210–212 (KTG)) interacts with substrate.

The protein belongs to the class-D beta-lactamase family.

It carries out the reaction a beta-lactam + H2O = a substituted beta-amino acid. With respect to regulation, inhibited by clavulanic acid. Functionally, this is an oxacillin-hydrolyzing beta-lactamase. The protein is Beta-lactamase OXA-20 (bla) of Pseudomonas aeruginosa.